Here is a 324-residue protein sequence, read N- to C-terminus: Germination protease (324 aa).

Residues 1-10 constitute a propeptide that is removed on maturation; the sequence is MIIVLGIRTD.

It belongs to the peptidase A25 family. In terms of assembly, homotetramer. Autoproteolytically processed. The inactive tetrameric zymogen termed p46 autoprocesses to a smaller form termed p41, which is active only during spore germination.

The enzyme catalyses Endopeptidase action with P4 Glu or Asp, P1 preferably Glu &gt; Asp, P1' hydrophobic and P2' Ala.. Initiates the rapid degradation of small, acid-soluble proteins during spore germination. This chain is Germination protease, found in Caldanaerobacter subterraneus subsp. tengcongensis (strain DSM 15242 / JCM 11007 / NBRC 100824 / MB4) (Thermoanaerobacter tengcongensis).